A 794-amino-acid chain; its full sequence is Zinc finger and BTB domain-containing protein 17 (794 aa).

In terms of domain architecture, BTB spans 1 to 104; sequence MDFPQHSQRV…VASFLQMQDI (104 aa). The disordered stretch occupies residues 116-285; sequence EPSSTTGESA…QNLRSGTYGD (170 aa). The segment covering 132-142 has biased composition (basic and acidic residues); sequence GGDKRAKDEKA. The segment covering 203–216 has biased composition (low complexity); sequence SSMAAAEAEALSES. Positions 243 to 252 are enriched in basic and acidic residues; the sequence is VKEEGMHLDN. Acidic residues predominate over residues 254 to 263; sequence EPPEENEESA. An interaction with MYC region spans residues 260 to 299; sequence EESAGTDSGQELGMEGQNLRSGTYGDRTESKAYGSIIHKC. 13 C2H2-type zinc fingers span residues 297 to 319, 325 to 347, 353 to 375, 381 to 403, 409 to 431, 437 to 459, 465 to 487, 493 to 515, 519 to 543, 549 to 571, 577 to 599, 605 to 628, and 708 to 730; these read HKCEDCGKEFTHTGNFKRHIRIH, FSCRECSKAFSDPAACKAHEKTH, YGCEECGKSYRLISLLNLHKKRH, YRCGDCGKLFTTSGNLKRHQLVH, YQCDYCGRSFSDPTSKMRHLETH, HKCPHCDKKFNQVGNLKAHLKIH, LKCRECGKQFTTSGNLKRHLRIH, YVCTHCQRQFADPGALQRHVRIH, KPCQCVICGKAFTQASSLIAHVRQH, YVCERCGKRFVQSSQLANHIRHH, HKCSVCSKAFVNVGDLSKHIIIH, YLCDKCGRGFNRVDNLRSHVKTVH, and YACDSCGDKFLDANSLAQHVRIH. Residue lysine 388 forms a Glycyl lysine isopeptide (Lys-Gly) (interchain with G-Cter in ubiquitin) linkage. A Glycyl lysine isopeptide (Lys-Gly) (interchain with G-Cter in ubiquitin) cross-link involves residue lysine 472. The interaction with MYC stretch occupies residues 628–709; sequence HQGKAGIKIL…EDPNTHILYA (82 aa). An interaction with HCFC1 region spans residues 628 to 794; that stretch reads HQGKAGIKIL…TAPDCLPPAE (167 aa). The interval 769–794 is disordered; the sequence is PRDGTEGQPTLAESPPTAPDCLPPAE. Residues 784-794 show a composition bias toward pro residues; it reads PTAPDCLPPAE.

It belongs to the krueppel C2H2-type zinc-finger protein family. In terms of assembly, homooligomerizes (via the BTB/POZ domain), multimerization is required for DNA binding. Binds to the C-terminal helix-loop-helix motif of MYC which inhibits ZBTB17 transactivation and growth arrest activities and renders it insoluble in the nucleus. Also interacts with HCFC1, MAGEA4 and TMPRSS11A. Interacts (via the C-terminal zinc fingers) with GFI1; the interaction results in the recruitment of MYC to the CDKN1A/p21 and CDKN1B promoters and repression of transcription. Interacts with TRAF2, interfering with the binding of UBC13 to TRAF2, and inhibiting TRAF2 E3 ligase activity. Interacts with BCL6; the interaction inhibits ZBTB17 transactivation activity on target genes involved in cell cycle arrest. Interacts with ZBTB49; this interaction blocks ZBTB17-mediated repression of RB1. Undergoes 'Lys-48'-linked polyubiquitination at Lys-388 and Lys-472 and subsequent proteasomal degradation in a TRAF2-dependent manner and upon TNFA stimulation. Found in all the embryonic and adult tissues examined.

The protein resides in the nucleus. Functionally, transcription factor that can function as an activator or repressor depending on its binding partners, and by targeting negative regulators of cell cycle progression. Has been shown to bind to the promoters of adenovirus major late protein and cyclin D1 and activate transcription. Required for early embryonic development during gastrulation. Plays a critical role in early lymphocyte development, where it is essential to prevent apoptosis in lymphoid precursors, allowing them to survive in response to IL7 and undergo proper lineage commitment. Represses RB1 transcription; this repression can be blocked by interaction with ZBTB49. The polypeptide is Zinc finger and BTB domain-containing protein 17 (Zbtb17) (Mus musculus (Mouse)).